We begin with the raw amino-acid sequence, 96 residues long: Redox-responsive transcriptional regulator WhiB3 (96 aa).

Residues 22–86 enclose the 4Fe-4S Wbl-type domain; sequence LCRGVDSSMF…GGLSESEREL (65 aa). [4Fe-4S] cluster is bound by residues Cys-23, Cys-53, Cys-56, and Cys-62.

It belongs to the WhiB family. [4Fe-4S] cluster serves as cofactor. Post-translationally, the Fe-S cluster can be nitrosylated by nitric oxide (NO). In terms of processing, upon Fe-S cluster removal intramolecular disulfide bonds are formed.

The protein resides in the cytoplasm. Its function is as follows. A redox-sensitive transcriptional regulator. Maintains intracellular redox homeostasis by regulating catabolic metabolism and polyketide biosynthesis. Regulates expression of the redox buffer ergothioneine (ERG). In concert with myothiol (MSH), another redox buffer, responds to low pH leading to acid resistance. The apo- but not holo-form probably binds DNA. The chain is Redox-responsive transcriptional regulator WhiB3 (whiB3) from Mycolicibacterium smegmatis (strain ATCC 700084 / mc(2)155) (Mycobacterium smegmatis).